Consider the following 3084-residue polypeptide: Protein prune homolog 2 (3084 aa).

Met-1 bears the N-acetylmethionine mark. A DHH motif motif is present at residues 109–111; it reads GSH. 18 disordered regions span residues 394–417, 430–465, 500–536, 672–733, 811–837, 861–907, 947–1080, 1224–1316, 1338–1395, 1502–1543, 1600–1652, 1776–1799, 1836–1886, 1961–1980, 2071–2196, 2410–2782, 2797–2816, and 2825–2859; these read QPSS…QADG, TIRS…PGFD, ASEQ…PKGL, EQES…QKEE, KNTW…MGQS, EIWG…KATG, SASN…DDPS, NMPS…GQSE, SGVN…LEVE, MNST…DLHD, GFGK…TTKR, ETGT…DPDK, GELE…GDKS, DENG…QENQ, ILTH…NPEV, MLLS…SHPR, QSEG…EIDI, and DEAD…AEEE. The span at 501 to 511 shows a compositional bias: polar residues; the sequence is SEQSQPSSHSA. 2 stretches are compositionally biased toward basic and acidic residues: residues 682–696 and 723–733; these read PWKD…RRTS and GNKEAQDQKEE. Composition is skewed to polar residues over residues 811–828 and 865–891; these read KNTW…SGQE and KNNS…NNSK. Low complexity predominate over residues 962–975; sequence TNYSTSDSYTSPTY. Residues 977 to 999 are compositionally biased toward basic and acidic residues; the sequence is GDEKEIANKPVDKDNGFEAKDAE. Residues 1009 to 1019 show a composition bias toward polar residues; it reads ATSSQQSQRNR. Positions 1034-1063 are enriched in basic and acidic residues; the sequence is HTEDKPEGNDAHHPDSDALKTEHAEDKNAS. Residues 1071–1080 show a composition bias toward low complexity; sequence SSPSSYDDPS. The span at 1248-1261 shows a compositional bias: basic and acidic residues; sequence SPRHSNGKDSHMLE. Residues 1265–1294 are compositionally biased toward polar residues; it reads LSESGGLTSQPVNQDTWGDSQGDTASSVTG. The span at 1350–1366 shows a compositional bias: basic and acidic residues; that stretch reads KPRDQEFSSSDAFEHQD. Over residues 1368 to 1378 the composition is skewed to low complexity; that stretch reads SSASGKISSLS. Composition is skewed to polar residues over residues 1779-1792, 1854-1869, and 1965-1980; these read TMDT…STEA, PIQN…STNP, and CVST…QENQ. The span at 2089 to 2103 shows a compositional bias: basic and acidic residues; that stretch reads VCHDSEGEQKMEKHT. The segment covering 2162-2174 has biased composition (low complexity); that stretch reads SSKPASSRSSPEP. Composition is skewed to basic and acidic residues over residues 2416-2428, 2506-2525, and 2535-2553; these read PDHR…ETNI, KQTE…EDHQ, and SHEK…RENI. Polar residues predominate over residues 2569 to 2584; it reads PETQLSGTPDTCQSEF. Low complexity predominate over residues 2595 to 2606; it reads RMSSSSNHESAS. Residues 2607 to 2617 are compositionally biased toward polar residues; the sequence is LENPAQDQSWM. The segment covering 2653–2664 has biased composition (basic and acidic residues); that stretch reads KGPKSQVLERNK. Residues 2806–2816 show a composition bias toward acidic residues; that stretch reads DNLDSPDEIDI. Positions 2840–2849 are enriched in polar residues; that stretch reads ANKSSGQESE. The CRAL-TRIO domain maps to 2879–3040; sequence DMKVIEPYRR…SIIKYDEEKS (162 aa).

Belongs to the PPase class C family. Prune subfamily.

The protein localises to the cytoplasm. In terms of biological role, may play an important role in regulating differentiation, survival and aggressiveness of the tumor cells. This Mus musculus (Mouse) protein is Protein prune homolog 2 (Prune2).